Consider the following 860-residue polypeptide: DNA mismatch repair protein MutS (860 aa).

Position 621–628 (621–628 (GPNMGGKS)) interacts with ATP.

The protein belongs to the DNA mismatch repair MutS family.

In terms of biological role, this protein is involved in the repair of mismatches in DNA. It is possible that it carries out the mismatch recognition step. This protein has a weak ATPase activity. The chain is DNA mismatch repair protein MutS from Salmonella arizonae (strain ATCC BAA-731 / CDC346-86 / RSK2980).